Reading from the N-terminus, the 164-residue chain is Large ribosomal subunit protein uL15 (164 aa).

Residues 1 to 52 form a disordered region; sequence MSLSKLKAPKGANRERTRVGRGQGSGLGKTAGRGGKGQKARSGNMHFEGFEG. Residues 21 to 37 are compositionally biased toward gly residues; sequence RGQGSGLGKTAGRGGKG.

The protein belongs to the universal ribosomal protein uL15 family. Part of the 50S ribosomal subunit.

In terms of biological role, binds to the 23S rRNA. This chain is Large ribosomal subunit protein uL15, found in Anaeromyxobacter sp. (strain Fw109-5).